The chain runs to 220 residues: Iron-sulfur cluster repair protein YtfE (220 aa).

Belongs to the RIC family. YtfE subfamily. In terms of assembly, homodimer.

It is found in the cytoplasm. Di-iron-containing protein involved in the repair of iron-sulfur clusters damaged by oxidative and nitrosative stress conditions. The sequence is that of Iron-sulfur cluster repair protein YtfE from Salmonella schwarzengrund (strain CVM19633).